The chain runs to 227 residues: ATP synthase F(0) complex subunit a (227 aa).

6 helical membrane passes run 14-34, 69-89, 99-119, 139-159, 165-185, and 190-210; these read FLGI…FPTP, WAIL…LGLL, LSLN…IGMF, VPVL…ALGV, LTAG…LLTM, and ALLT…VAMI.

This sequence belongs to the ATPase A chain family. As to quaternary structure, component of the ATP synthase complex composed at least of ATP5F1A/subunit alpha, ATP5F1B/subunit beta, ATP5MC1/subunit c (homooctomer), MT-ATP6/subunit a, MT-ATP8/subunit 8, ATP5ME/subunit e, ATP5MF/subunit f, ATP5MG/subunit g, ATP5MK/subunit k, ATP5MJ/subunit j, ATP5F1C/subunit gamma, ATP5F1D/subunit delta, ATP5F1E/subunit epsilon, ATP5PF/subunit F6, ATP5PB/subunit b, ATP5PD/subunit d, ATP5PO/subunit OSCP. ATP synthase complex consists of a soluble F(1) head domain (subunits alpha(3) and beta(3)) - the catalytic core - and a membrane F(0) domain - the membrane proton channel (subunits c, a, 8, e, f, g, k and j). These two domains are linked by a central stalk (subunits gamma, delta, and epsilon) rotating inside the F1 region and a stationary peripheral stalk (subunits F6, b, d, and OSCP). Interacts with DNAJC30; interaction is direct.

It is found in the mitochondrion inner membrane. The catalysed reaction is H(+)(in) = H(+)(out). In terms of biological role, subunit a, of the mitochondrial membrane ATP synthase complex (F(1)F(0) ATP synthase or Complex V) that produces ATP from ADP in the presence of a proton gradient across the membrane which is generated by electron transport complexes of the respiratory chain. ATP synthase complex consist of a soluble F(1) head domain - the catalytic core - and a membrane F(1) domain - the membrane proton channel. These two domains are linked by a central stalk rotating inside the F(1) region and a stationary peripheral stalk. During catalysis, ATP synthesis in the catalytic domain of F(1) is coupled via a rotary mechanism of the central stalk subunits to proton translocation. With the subunit c (ATP5MC1), forms the proton-conducting channel in the F(0) domain, that contains two crucial half-channels (inlet and outlet) that facilitate proton movement from the mitochondrial intermembrane space (IMS) into the matrix. Protons are taken up via the inlet half-channel and released through the outlet half-channel, following a Grotthuss mechanism. The sequence is that of ATP synthase F(0) complex subunit a from Scyliorhinus canicula (Small-spotted catshark).